Consider the following 120-residue polypeptide: Small ribosomal subunit protein bS16 (120 aa).

Residues 81-120 (GLAKRPTRNNPQKAEPGEKAKERAAKRAEKAAAPAEDAAA) form a disordered region. Positions 95-110 (EPGEKAKERAAKRAEK) are enriched in basic and acidic residues. Residues 111–120 (AAAPAEDAAA) show a composition bias toward low complexity.

This sequence belongs to the bacterial ribosomal protein bS16 family.

This chain is Small ribosomal subunit protein bS16, found in Methylorubrum extorquens (strain CM4 / NCIMB 13688) (Methylobacterium extorquens).